Reading from the N-terminus, the 354-residue chain is Anthranilate phosphoribosyltransferase (354 aa).

5-phospho-alpha-D-ribose 1-diphosphate-binding positions include Gly94, 97 to 98 (GD), Thr102, 104 to 107 (NIST), 122 to 130 (KHGNRAASS), and Ser134. An anthranilate-binding site is contributed by Gly94. Ser106 contacts Mg(2+). Asn125 lines the anthranilate pocket. Arg180 contacts anthranilate. Mg(2+)-binding residues include Asp238 and Glu239.

The protein belongs to the anthranilate phosphoribosyltransferase family. As to quaternary structure, homodimer. The cofactor is Mg(2+).

The catalysed reaction is N-(5-phospho-beta-D-ribosyl)anthranilate + diphosphate = 5-phospho-alpha-D-ribose 1-diphosphate + anthranilate. The protein operates within amino-acid biosynthesis; L-tryptophan biosynthesis; L-tryptophan from chorismate: step 2/5. In terms of biological role, catalyzes the transfer of the phosphoribosyl group of 5-phosphorylribose-1-pyrophosphate (PRPP) to anthranilate to yield N-(5'-phosphoribosyl)-anthranilate (PRA). The sequence is that of Anthranilate phosphoribosyltransferase from Streptomyces avermitilis (strain ATCC 31267 / DSM 46492 / JCM 5070 / NBRC 14893 / NCIMB 12804 / NRRL 8165 / MA-4680).